The sequence spans 525 residues: MTQDIHAHRILILDFGSQYTQLIARRVREAGVYCEIYAWDAPETAIRDFGAAGFILSGGPESMTVDNGPRVPEAVFQAGVPVLGICYGMQAMAGQLGGRVEASDHKEFGYARVRARGHSRLLRDIEDHASPEGWGLLDVWMSHGDRVTGLPPGFKLIASTESCPIAGIGDDERGYYGVQFHPEVTHTPQGARILSRFVHEICGCPADWTPGNIVDDLIERVRRQVGGDKVLLGLSGGVDSSVVAALLHRAIGDQLTCVFVDNGLLRKDEGDQVMATFARHMGVNVIRVDAEARFLEALKGVDDPERKRKIIGNMFIEVFDEQAARLTEVDWLAQGTIYPDVIESAGSATGKAHVIKSHHNVGGLPEDMTLKLVEPLRELFKDEVRRIGLELGLPADMVYRHPFPGPGLGVRILGEVRKEYADLLREADAIFIEELRAHDLYDQVSQAFAVFLPVKSVGVTGDGRRYEYVVALRAVETIDFMTARWAHLPYEFLDHVSRRIINEIPGISRVAYDISGKPPATIEWE.

The Glutamine amidotransferase type-1 domain maps to 9–207 (RILILDFGSQ…VHEICGCPAD (199 aa)). The active-site Nucleophile is the Cys-86. Catalysis depends on residues His-181 and Glu-183. The GMPS ATP-PPase domain occupies 208-400 (WTPGNIVDDL…LGLPADMVYR (193 aa)). 235-241 (SGGVDSS) provides a ligand contact to ATP.

As to quaternary structure, homodimer.

It carries out the reaction XMP + L-glutamine + ATP + H2O = GMP + L-glutamate + AMP + diphosphate + 2 H(+). The protein operates within purine metabolism; GMP biosynthesis; GMP from XMP (L-Gln route): step 1/1. Its function is as follows. Catalyzes the synthesis of GMP from XMP. The sequence is that of GMP synthase [glutamine-hydrolyzing] from Alkalilimnicola ehrlichii (strain ATCC BAA-1101 / DSM 17681 / MLHE-1).